We begin with the raw amino-acid sequence, 295 residues long: Protease HtpX (295 aa).

The next 2 helical transmembrane spans lie at 4-24 and 41-61; these read ILLF…TLSL and SSLL…SLFI. Position 147 (His147) interacts with Zn(2+). Residue Glu148 is part of the active site. His151 contacts Zn(2+). A run of 2 helical transmembrane segments spans residues 158 to 178 and 199 to 219; these read VTLA…ARII and VATI…VMWF. Glu224 is a binding site for Zn(2+).

This sequence belongs to the peptidase M48B family. Zn(2+) serves as cofactor.

It is found in the cell inner membrane. The protein is Protease HtpX of Pseudomonas putida (strain ATCC 47054 / DSM 6125 / CFBP 8728 / NCIMB 11950 / KT2440).